A 57-amino-acid polypeptide reads, in one-letter code: uncharacterized protein (57 aa).

An N-terminal signal peptide occupies residues 1–22 (MNEIIITIIVLILLLFITLSRN). The stretch at 26-57 (NNQSNNGKKEKLIKCKKEVQQLRQKLDQLTFQ) forms a coiled coil.

This is an uncharacterized protein from Acheta domesticus (House cricket).